A 71-amino-acid polypeptide reads, in one-letter code: Large ribosomal subunit protein bL31 (71 aa).

The Zn(2+) site is built by Cys-16, Cys-18, Cys-37, and Cys-40.

It belongs to the bacterial ribosomal protein bL31 family. Type A subfamily. In terms of assembly, part of the 50S ribosomal subunit. Zn(2+) serves as cofactor.

Binds the 23S rRNA. The chain is Large ribosomal subunit protein bL31 from Nitratidesulfovibrio vulgaris (strain ATCC 29579 / DSM 644 / CCUG 34227 / NCIMB 8303 / VKM B-1760 / Hildenborough) (Desulfovibrio vulgaris).